The chain runs to 39 residues: Cytochrome b559 subunit beta (39 aa).

Residues 14 to 30 traverse the membrane as a helical segment; sequence WLAVHGLAVPTVFFLGS. Position 18 (histidine 18) interacts with heme.

It belongs to the PsbE/PsbF family. As to quaternary structure, heterodimer of an alpha subunit and a beta subunit. PSII is composed of 1 copy each of membrane proteins PsbA, PsbB, PsbC, PsbD, PsbE, PsbF, PsbH, PsbI, PsbJ, PsbK, PsbL, PsbM, PsbT, PsbX, PsbY, PsbZ, Psb30/Ycf12, at least 3 peripheral proteins of the oxygen-evolving complex and a large number of cofactors. It forms dimeric complexes. Heme b is required as a cofactor.

The protein localises to the plastid. The protein resides in the chloroplast thylakoid membrane. This b-type cytochrome is tightly associated with the reaction center of photosystem II (PSII). PSII is a light-driven water:plastoquinone oxidoreductase that uses light energy to abstract electrons from H(2)O, generating O(2) and a proton gradient subsequently used for ATP formation. It consists of a core antenna complex that captures photons, and an electron transfer chain that converts photonic excitation into a charge separation. In Adiantum capillus-veneris (Maidenhair fern), this protein is Cytochrome b559 subunit beta.